A 433-amino-acid polypeptide reads, in one-letter code: 3-phosphoshikimate 1-carboxyvinyltransferase (433 aa).

3-phosphoshikimate-binding residues include lysine 22, serine 23, and arginine 27. Lysine 22 contributes to the phosphoenolpyruvate binding site. Phosphoenolpyruvate-binding residues include glycine 95 and arginine 123. Residues serine 167, glutamine 169, aspartate 315, and lysine 342 each coordinate 3-phosphoshikimate. Glutamine 169 lines the phosphoenolpyruvate pocket. The Proton acceptor role is filled by aspartate 315. Residues arginine 346 and arginine 387 each contribute to the phosphoenolpyruvate site.

The protein belongs to the EPSP synthase family. As to quaternary structure, monomer.

The protein resides in the cytoplasm. The catalysed reaction is 3-phosphoshikimate + phosphoenolpyruvate = 5-O-(1-carboxyvinyl)-3-phosphoshikimate + phosphate. The protein operates within metabolic intermediate biosynthesis; chorismate biosynthesis; chorismate from D-erythrose 4-phosphate and phosphoenolpyruvate: step 6/7. Functionally, catalyzes the transfer of the enolpyruvyl moiety of phosphoenolpyruvate (PEP) to the 5-hydroxyl of shikimate-3-phosphate (S3P) to produce enolpyruvyl shikimate-3-phosphate and inorganic phosphate. This chain is 3-phosphoshikimate 1-carboxyvinyltransferase, found in Legionella pneumophila (strain Lens).